Consider the following 258-residue polypeptide: 2-oxo-tetronate isomerase (258 aa).

Glu143 functions as the Proton donor/acceptor in the catalytic mechanism. The Mg(2+) site is built by Glu143, Asp178, Gln204, and Glu240. Glu240 (proton donor/acceptor) is an active-site residue.

It belongs to the hyi family. OtnI subfamily.

It catalyses the reaction 2-dehydro-L-erythronate = 3-dehydro-L-erythronate. The catalysed reaction is 2-dehydro-D-erythronate = 3-dehydro-D-erythronate. Catalyzes the isomerization of 2-oxo-tetronate to 3-oxo-tetronate. This chain is 2-oxo-tetronate isomerase, found in Haemophilus influenzae (strain ATCC 51907 / DSM 11121 / KW20 / Rd).